Consider the following 760-residue polypeptide: Polyribonucleotide nucleotidyltransferase (760 aa).

Positions 492 and 498 each coordinate Mg(2+). Residues 559–618 (PQHAEVFVNPDIIRIIIGPGGKNIKAITATTGASIDIEDSGRVSIFAPTLEAMEMAREMV) form the KH domain. Positions 628-702 (GKNYTGKVRK…SRKAVLLEEQ (75 aa)) constitute an S1 motif domain. The segment at 706-760 (WKPEDTARPSGPREGGRRDGGRDGRRDGGRDGRRDGGRDGGRRDGGRRDGGRDRN) is disordered. Residues 719–760 (EGGRRDGGRDGRRDGGRDGRRDGGRDGGRRDGGRRDGGRDRN) are compositionally biased toward basic and acidic residues.

This sequence belongs to the polyribonucleotide nucleotidyltransferase family. It depends on Mg(2+) as a cofactor.

It is found in the cytoplasm. The catalysed reaction is RNA(n+1) + phosphate = RNA(n) + a ribonucleoside 5'-diphosphate. Its function is as follows. Involved in mRNA degradation. Catalyzes the phosphorolysis of single-stranded polyribonucleotides processively in the 3'- to 5'-direction. This chain is Polyribonucleotide nucleotidyltransferase, found in Nitratidesulfovibrio vulgaris (strain ATCC 29579 / DSM 644 / CCUG 34227 / NCIMB 8303 / VKM B-1760 / Hildenborough) (Desulfovibrio vulgaris).